The sequence spans 158 residues: Cysteine and tyrosine-rich protein 1 (158 aa).

A signal peptide spans 1–31; sequence MENPRSASLQKSWKFVRESLLLCLIAGRGEA. The Extracellular portion of the chain corresponds to 32–62; it reads QCDGCIEYCCDGVPPFCCSYYAYVGDVLSGT. Residues 63–83 form a helical membrane-spanning segment; it reads AISGIVFGVVFLMGAVAAVFL. Residues 84–158 lie on the Cytoplasmic side of the membrane; that stretch reads CVCMCVKNSR…PPPYPGFSRK (75 aa). Positions 119-158 are disordered; sequence PYSYDHEMFPPDLRPPPYTPTVPRSANYSPPPPYPGFSRK. Over residues 147–158 the composition is skewed to pro residues; that stretch reads SPPPPYPGFSRK.

Belongs to the CYYR1 family.

The protein resides in the membrane. In Danio rerio (Zebrafish), this protein is Cysteine and tyrosine-rich protein 1 (cyyr1).